The primary structure comprises 77 residues: MPKRLLQGVVISSKADKTVTVKVERKFKHPIYKKFVKVSKKYAAHDSENKYQEGDKVSIIESRPISKTKTWVVVNGE.

It belongs to the universal ribosomal protein uS17 family. Part of the 30S ribosomal subunit.

One of the primary rRNA binding proteins, it binds specifically to the 5'-end of 16S ribosomal RNA. In Rickettsia rickettsii (strain Sheila Smith), this protein is Small ribosomal subunit protein uS17.